A 175-amino-acid chain; its full sequence is Ribosome maturation factor RimM (175 aa).

The region spanning 99-172 is the PRC barrel domain; sequence EGEFHLLDLV…WLRLTPPPGL (74 aa).

The protein belongs to the RimM family. As to quaternary structure, binds ribosomal protein uS19.

Its subcellular location is the cytoplasm. In terms of biological role, an accessory protein needed during the final step in the assembly of 30S ribosomal subunit, possibly for assembly of the head region. Essential for efficient processing of 16S rRNA. May be needed both before and after RbfA during the maturation of 16S rRNA. It has affinity for free ribosomal 30S subunits but not for 70S ribosomes. The protein is Ribosome maturation factor RimM of Synechococcus sp. (strain WH7803).